The chain runs to 207 residues: Enolase (207 aa).

Q162 serves as a coordination point for (2R)-2-phosphoglycerate. E204 acts as the Proton donor in catalysis.

Belongs to the enolase family.

Its subcellular location is the cytoplasm. It localises to the secreted. It is found in the cell surface. It carries out the reaction (2R)-2-phosphoglycerate = phosphoenolpyruvate + H2O. Its pathway is carbohydrate degradation; glycolysis; pyruvate from D-glyceraldehyde 3-phosphate: step 4/5. Functionally, catalyzes the reversible conversion of 2-phosphoglycerate (2-PG) into phosphoenolpyruvate (PEP). It is essential for the degradation of carbohydrates via glycolysis. The polypeptide is Enolase (Campylobacter fetus).